A 434-amino-acid polypeptide reads, in one-letter code: Nicotinate phosphoribosyltransferase (434 aa).

H242 is subject to Phosphohistidine; by autocatalysis.

Belongs to the NAPRTase family. In terms of processing, transiently phosphorylated on a His residue during the reaction cycle. Phosphorylation strongly increases the affinity for substrates and increases the rate of nicotinate D-ribonucleotide production. Dephosphorylation regenerates the low-affinity form of the enzyme, leading to product release.

It catalyses the reaction nicotinate + 5-phospho-alpha-D-ribose 1-diphosphate + ATP + H2O = nicotinate beta-D-ribonucleotide + ADP + phosphate + diphosphate. It functions in the pathway cofactor biosynthesis; NAD(+) biosynthesis; nicotinate D-ribonucleotide from nicotinate: step 1/1. Its function is as follows. Catalyzes the synthesis of beta-nicotinate D-ribonucleotide from nicotinate and 5-phospho-D-ribose 1-phosphate at the expense of ATP. The protein is Nicotinate phosphoribosyltransferase of Bradyrhizobium sp. (strain BTAi1 / ATCC BAA-1182).